We begin with the raw amino-acid sequence, 238 residues long: Orotidine 5'-phosphate decarboxylase (238 aa).

Residues Asp10, Lys32, 59–68 (DLKLHDIPNT), Thr122, Arg184, Gln193, Gly213, and Arg214 each bind substrate. The Proton donor role is filled by Lys61.

It belongs to the OMP decarboxylase family. Type 1 subfamily. As to quaternary structure, homodimer.

The catalysed reaction is orotidine 5'-phosphate + H(+) = UMP + CO2. It functions in the pathway pyrimidine metabolism; UMP biosynthesis via de novo pathway; UMP from orotate: step 2/2. Catalyzes the decarboxylation of orotidine 5'-monophosphate (OMP) to uridine 5'-monophosphate (UMP). This Bacillus thuringiensis subsp. konkukian (strain 97-27) protein is Orotidine 5'-phosphate decarboxylase.